The primary structure comprises 794 residues: MSSSSNVTSLPRLTTAGGVFPREMVRVHSSCNILRSKAKVGGINYFNPGNIKCVEVHKSRQVAVAAVKSLEYETEKPTNQDVVSEKMRVLSERIGTMLQNMNEGEISISPYDTAWVALVEDTDGRPQFPTSLEWISNNQLADGSWGDRKFVIYDRILNTLACVVALTTWNMHPHKCNRGLRFIRDNIEKLENENEELMPIGFEVVFPSLIEAAQKLGIEIPHIDSPCIKKIQAMRDFKLKRIPMELLHKKPTSLLHSLEGMQGLVWEKLLDFRSDGSFLCSPSSTAYALQHTKDELCLQYLLKAVKKFNGGVPNVYPVDMFEHLWCVDRLQRLGICRYFRAQIKEMLDYVYKYWTDKGICWARNTNVQDVDDTAMGFRLLRMHGYDVSTDVFKQFEKAGEFCCFPGQSTHAITGMYNVYRTSQIMFDGEDILADAKNYSATFLHQKRLASELVDKWIITKDLPGEVGYALDVPFFASLPRLEARFFLEQYGGDDDVWIGKTLYRMPYVNSDTYLELAKLDYKKCQAVHQLEWKSIQKWYRDCKLGEFGLGEKRLLLAYFLAASTAFEPEKKGERLAWAKTAFLVETIASQQLSHEQKREFPNEFEHGSSLNMENGGRYKTRTRLVEILSNTVSQLSFETLVAEGRDIKQQLSNTWQKWLKTWEEGGNLGEAEAQLLLQTLHLSSGLDESSFSHPKYHQLLEATCKVCNQLRLFQNRKAHDAQGGISDLVIGTTFQIEASMQELVKLVFTKSSEDLDSITKQSFFAIARSFYYTAYCDAGAINSHIYKVLFENID.

Residues 1 to 35 constitute a chloroplast transit peptide; the sequence is MSSSSNVTSLPRLTTAGGVFPREMVRVHSSCNILR. K238 serves as a coordination point for substrate. Residues D369 and D371 each contribute to the Mg(2+) site. The DXDD motif motif lies at 369–372; that stretch reads DVDD. A substrate-binding site is contributed by K455.

Belongs to the terpene synthase family. Tpsc subfamily. The cofactor is Mg(2+). In terms of tissue distribution, expressed in leaves.

It is found in the plastid. The protein localises to the chloroplast. The enzyme catalyses (2E,6E,10E)-geranylgeranyl diphosphate = ent-copalyl diphosphate. It functions in the pathway secondary metabolite biosynthesis; terpenoid biosynthesis. Functionally, involved in the biosynthesis of ent-kaurene diterpenoids natural products such as oridonin, miltiradiene, eriocalyxin B and nezukol, known to exhibit antitumor, anti-inflammatory and antibacterial activities. Catalyzes the conversion of (2E,6E,10E)-geranylgeranyl diphosphate (GGPP) to ent-copalyl diphosphate (ent-CPP). The chain is Ent-copalyl diphosphate synthase 2 from Isodon eriocalyx (Plectranthus eriocalyx).